A 30-amino-acid polypeptide reads, in one-letter code: Rothein 3.4 (30 aa).

Residue Leu30 is modified to Leucine amide.

Belongs to the frog skin active peptide (FSAP) family. Rothein subfamily. In terms of tissue distribution, expressed by the skin dorsal glands.

The protein localises to the secreted. In terms of biological role, lacks antimicrobial activity. Does not inhibit the formation of NO by neuronal nitric oxide. The sequence is that of Rothein 3.4 from Litoria rothii (Roth's tree frog).